A 402-amino-acid chain; its full sequence is MRGEERWQEQPALASHPSRATLRPRGWPRLGLAPTGVGSSCPPAPASELARHLARRAPVSASPPVLPPIKDQGARPPTLAASAAAASSPPPPPPPPIPPLPPSTSTSAARPTDMAGVTSKRRSSSASTSSSSGDGAAVSDRPRGVTRKRRSGGRCPRPAASLRPAAPRPSSHHTAGLRVILQKELRYSDVSQLGRIVLPKKEAEAYLPILTSKDGKKSLCMHDLQNAQLWTFKYRYWPNNKSRMYVLENTGDYVRTHDLQLGDSIVIYKDDENNRFVIGAKKAGDQQAATVPQVDEHISTLFPIFPIAQVDDYLSPMAPQVDISAFVPHADENHEIFDGILNSLPEIPVANVRYSDFFDPFDDGMDMANTLNANANQSASLHVTDDKSGHSLIPNPKSGPHM.

Residues 1–174 (MRGEERWQEQ…AAPRPSSHHT (174 aa)) are disordered. Over residues 74–87 (ARPPTLAASAAAAS) the composition is skewed to low complexity. A compositionally biased stretch (pro residues) spans 88 to 102 (SPPPPPPPPIPPLPP). Low complexity-rich tracts occupy residues 103–139 (STST…AAVS) and 156–169 (PRPA…APRP). Positions 181–284 (LQKELRYSDV…RFVIGAKKAG (104 aa)) form a DNA-binding region, TF-B3. Residues 381-402 (LHVTDDKSGHSLIPNPKSGPHM) are disordered.

Expressed in anthers, pollen grains and young developing embryos.

Its subcellular location is the nucleus. Functionally, transcription repressor involved in flowering time regulation. Represses the flowering activator EHD1 by binding specifically to the DNA sequence 5'-CATGCATG-3 of its promoter. The protein is B3 domain-containing protein LFL1 (LFL1) of Oryza sativa subsp. japonica (Rice).